The primary structure comprises 637 residues: Probable serine/threonine-protein kinase DDB_G0283065 (637 aa).

Disordered stretches follow at residues 36 to 88 (NNNN…KFNR) and 155 to 234 (NSNN…RFNN). Residues 53 to 85 (NNSTTKSIDNNNNNTNNSNSNNNNNDNIKNNNK) are compositionally biased toward low complexity. The 394-residue stretch at 236-629 (FNDVRVLGKG…NQISTDYDNF (394 aa)) folds into the Protein kinase domain. ATP is bound by residues 242–250 (LGKGGFGIV) and Lys265. The active-site Proton acceptor is Asp479.

Belongs to the protein kinase superfamily. Ser/Thr protein kinase family. GCN2 subfamily.

The catalysed reaction is L-seryl-[protein] + ATP = O-phospho-L-seryl-[protein] + ADP + H(+). It carries out the reaction L-threonyl-[protein] + ATP = O-phospho-L-threonyl-[protein] + ADP + H(+). This is Probable serine/threonine-protein kinase DDB_G0283065 from Dictyostelium discoideum (Social amoeba).